The sequence spans 431 residues: Glutamate-1-semialdehyde 2,1-aminomutase 2 (431 aa).

An N6-(pyridoxal phosphate)lysine modification is found at Lys268.

Belongs to the class-III pyridoxal-phosphate-dependent aminotransferase family. HemL subfamily. As to quaternary structure, homodimer. Pyridoxal 5'-phosphate is required as a cofactor.

It is found in the cytoplasm. The enzyme catalyses (S)-4-amino-5-oxopentanoate = 5-aminolevulinate. The protein operates within porphyrin-containing compound metabolism; protoporphyrin-IX biosynthesis; 5-aminolevulinate from L-glutamyl-tRNA(Glu): step 2/2. This chain is Glutamate-1-semialdehyde 2,1-aminomutase 2, found in Anoxybacillus flavithermus (strain DSM 21510 / WK1).